A 729-amino-acid chain; its full sequence is Fatty acid oxidation complex subunit alpha (729 aa).

Residues 1–189 form an enoyl-CoA hydratase/isomerase region; it reads MLYKGDTLYL…KIGLVDGVVK (189 aa). Residue aspartate 296 coordinates substrate. Residues 311–729 form a 3-hydroxyacyl-CoA dehydrogenase region; sequence ETPKQAAVLG…ARPVGDLKTA (419 aa). Residues methionine 324, aspartate 343, 400 to 402, lysine 407, and serine 429 each bind NAD(+); that span reads VVE. Histidine 450 acts as the For 3-hydroxyacyl-CoA dehydrogenase activity in catalysis. Position 453 (asparagine 453) interacts with NAD(+). Positions 500 and 660 each coordinate substrate. Positions 708–729 are disordered; that stretch reads RHNEPYYPPVEPARPVGDLKTA.

In the N-terminal section; belongs to the enoyl-CoA hydratase/isomerase family. The protein in the C-terminal section; belongs to the 3-hydroxyacyl-CoA dehydrogenase family. As to quaternary structure, heterotetramer of two alpha chains (FadB) and two beta chains (FadA).

The catalysed reaction is a (3S)-3-hydroxyacyl-CoA + NAD(+) = a 3-oxoacyl-CoA + NADH + H(+). The enzyme catalyses a (3S)-3-hydroxyacyl-CoA = a (2E)-enoyl-CoA + H2O. It carries out the reaction a 4-saturated-(3S)-3-hydroxyacyl-CoA = a (3E)-enoyl-CoA + H2O. It catalyses the reaction (3S)-3-hydroxybutanoyl-CoA = (3R)-3-hydroxybutanoyl-CoA. The catalysed reaction is a (3Z)-enoyl-CoA = a 4-saturated (2E)-enoyl-CoA. The enzyme catalyses a (3E)-enoyl-CoA = a 4-saturated (2E)-enoyl-CoA. The protein operates within lipid metabolism; fatty acid beta-oxidation. In terms of biological role, involved in the aerobic and anaerobic degradation of long-chain fatty acids via beta-oxidation cycle. Catalyzes the formation of 3-oxoacyl-CoA from enoyl-CoA via L-3-hydroxyacyl-CoA. It can also use D-3-hydroxyacyl-CoA and cis-3-enoyl-CoA as substrate. In Escherichia coli O17:K52:H18 (strain UMN026 / ExPEC), this protein is Fatty acid oxidation complex subunit alpha.